A 346-amino-acid polypeptide reads, in one-letter code: Phosphoribosylformylglycinamidine cyclo-ligase (346 aa).

It belongs to the AIR synthase family.

Its subcellular location is the cytoplasm. The enzyme catalyses 2-formamido-N(1)-(5-O-phospho-beta-D-ribosyl)acetamidine + ATP = 5-amino-1-(5-phospho-beta-D-ribosyl)imidazole + ADP + phosphate + H(+). The protein operates within purine metabolism; IMP biosynthesis via de novo pathway; 5-amino-1-(5-phospho-D-ribosyl)imidazole from N(2)-formyl-N(1)-(5-phospho-D-ribosyl)glycinamide: step 2/2. The chain is Phosphoribosylformylglycinamidine cyclo-ligase from Polaromonas sp. (strain JS666 / ATCC BAA-500).